We begin with the raw amino-acid sequence, 306 residues long: MWFKNLQLHHLPAPWAVTPDQMEKWLAPHAFQPGSSVEMQRVGWASPRDDGALVYSINRQMLLLFRAEKKLLPASVVNQVTKARALEVEEQQGFKVGRKQLRELKEQVTDELLPRAFSIRRDTRVWIDTANGWLVIDAAAQALADDVRSLLVKSIDPLPLAGVHVARSPVAAMTDWLLSGEAPGGFTVDQDAELRSSDQGGATVRYVGHALEANDMRRHIETGKQCTRLAMTWNDRISFVLTPSLTIKRVTPLDVIKEAADPTAQNDDERFDSDFTLMTGELGRMLTDLVDILGGDRHDSIHQAAA.

Belongs to the RdgC family.

The protein localises to the cytoplasm. It is found in the nucleoid. Its function is as follows. May be involved in recombination. This chain is Recombination-associated protein RdgC, found in Burkholderia ambifaria (strain MC40-6).